A 184-amino-acid polypeptide reads, in one-letter code: NADH-quinone oxidoreductase subunit B (184 aa).

4 residues coordinate [4Fe-4S] cluster: Cys37, Cys38, Cys103, and Cys132.

It belongs to the complex I 20 kDa subunit family. NDH-1 is composed of 14 different subunits. Subunits NuoB, C, D, E, F, and G constitute the peripheral sector of the complex. Requires [4Fe-4S] cluster as cofactor.

The protein resides in the cell membrane. It carries out the reaction a quinone + NADH + 5 H(+)(in) = a quinol + NAD(+) + 4 H(+)(out). NDH-1 shuttles electrons from NADH, via FMN and iron-sulfur (Fe-S) centers, to quinones in the respiratory chain. The immediate electron acceptor for the enzyme in this species is believed to be a menaquinone. Couples the redox reaction to proton translocation (for every two electrons transferred, four hydrogen ions are translocated across the cytoplasmic membrane), and thus conserves the redox energy in a proton gradient. This is NADH-quinone oxidoreductase subunit B from Rhodococcus erythropolis (strain PR4 / NBRC 100887).